The primary structure comprises 611 residues: Autophagy-related protein 22-2 (611 aa).

Residues 1–24 are disordered; it reads MRADDNPSARSLHAQFPGDDTRPT. The helical transmembrane segment at 35–55 threads the bilayer; it reads YGWAAEVFTVCAMGSFLPITL. Asn78 is a glycosylation site (N-linked (GlcNAc...) asparagine). The next 3 helical transmembrane spans lie at 116-136, 151-171, and 175-195; these read TASF…VLII, LLVA…SVVP, and IVGA…FVLL. Asn221 carries N-linked (GlcNAc...) asparagine glycosylation. Helical transmembrane passes span 286–306 and 316–336; these read IGIG…VIIA and LVLF…ALWL. Asn353 is a glycosylation site (N-linked (GlcNAc...) asparagine). The next 6 helical transmembrane spans lie at 380-400, 414-434, 449-469, 483-503, 521-541, and 551-571; these read ILLF…VSGT, AALG…AFSW, IIAC…GFVP, WEMF…SSYC, ALYA…VGLI, and AFVF…LVDV.

The protein belongs to the ATG22 family.

Its subcellular location is the vacuole membrane. Vacuolar effluxer which mediate the efflux of amino acids resulting from autophagic degradation. The release of autophagic amino acids allows the maintenance of protein synthesis and viability during nitrogen starvation. This is Autophagy-related protein 22-2 (atg22-2) from Aspergillus clavatus (strain ATCC 1007 / CBS 513.65 / DSM 816 / NCTC 3887 / NRRL 1 / QM 1276 / 107).